The primary structure comprises 150 residues: Cell division protein SepF (150 aa).

It belongs to the SepF family. As to quaternary structure, homodimer. Interacts with FtsZ.

It is found in the cytoplasm. In terms of biological role, cell division protein that is part of the divisome complex and is recruited early to the Z-ring. Probably stimulates Z-ring formation, perhaps through the cross-linking of FtsZ protofilaments. Its function overlaps with FtsA. This is Cell division protein SepF from Clostridium kluyveri (strain NBRC 12016).